The following is a 644-amino-acid chain: MPRNAEAPAKGTTADDFAPTQWNIIYLLMTVGALMAALSISIQPLLLDKIFGIAFEKEGAVNADIQVVAEIVSIVCVGWFGLLSDRIGRVRIIALGFLIAVVGAAVSLLSLQVGLAFGAAGLVLFYLTRVLLTVGADTVQLQLSTLVGDVSSRANRPRLMGNLVFMMVFGGTMLAAIVMQMADYPGGVFLIMCLPLLAGIAGFQLTRRNLRDVAPPQPASEDDEHPLRQVWTVITSDPRMQLAFAAAFYTRADVIILSLFFSLWCISVSDLVGVTRTFATAHAAVMIGLLGLAVLAAVPLWRSFIERHSRISAIGASLSLAALGYIWLGMFANPFNWLVALPLLMVGIGHAGCFVTLQVLTVDASPKPILGAMVGAGYLVGGLGTVMLVQSGGYYFDALGPRAPFILMGTGKMLVTLYAAWLLANGIDETCDHHLKSARTVDWKPLVFLTAALPFVWLVGRSVIEGYISNGSLGEAPVGFVNRYLGDWAFTFLIISLAMRPVQEITGIKTLAKYRRMIGLFAFFYAVMHVLAYVALEWALNLGDMMGDIYKRPFILLGLVAFALLIPLAFTSANSQIKRIGGKRWKKLHSATYVINALVALHFILAANHENGEPYVYAAAVIVLLWYRFHQWRGGNVLRALRIG.

The segment at 1–427 (MPRNAEAPAK…YAAWLLANGI (427 aa)) is major facilitator domain. 18 helical membrane-spanning segments follow: residues 22 to 42 (WNII…SISI), 63 to 83 (ADIQ…FGLL), 92 to 112 (IIAL…LSLQ), 113 to 133 (VGLA…VLLT), 159 to 179 (LMGN…AIVM), 185 to 205 (PGGV…GFQL), 254 to 274 (VIIL…LVGV), 281 to 301 (AHAA…VPLW), 311 to 331 (ISAI…LGMF), 337 to 357 (WLVA…FVTL), 369 to 389 (ILGA…VMLV), 403 to 423 (APFI…AWLL), 440 to 460 (TVDW…WLVG), 478 to 498 (VGFV…ISLA), 518 to 538 (IGLF…ALEW), 553 to 573 (PFIL…FTSA), 588 to 608 (LHSA…LAAN), and 612 to 629 (GEPY…WYRF). The ferric reductase-like domain stretch occupies residues 488–599 (WAFTFLIISL…SATYVINALV (112 aa)).

The protein in the N-terminal section; belongs to the major facilitator superfamily.

It is found in the magnetosome membrane. In terms of biological role, required for correct biomineralization of the magnetosome; probably converts and then transports some form of iron. It is partially functionally redundant with MamH. May function with MamX, MamY amd Mms6. This is Magnetosome protein MamZ from Paramagnetospirillum magneticum (strain ATCC 700264 / AMB-1) (Magnetospirillum magneticum).